The following is a 338-amino-acid chain: Phenylalanine--tRNA ligase alpha subunit (338 aa).

Position 253 (Glu-253) interacts with Mg(2+).

It belongs to the class-II aminoacyl-tRNA synthetase family. Phe-tRNA synthetase alpha subunit type 1 subfamily. In terms of assembly, tetramer of two alpha and two beta subunits. Mg(2+) serves as cofactor.

The protein localises to the cytoplasm. It catalyses the reaction tRNA(Phe) + L-phenylalanine + ATP = L-phenylalanyl-tRNA(Phe) + AMP + diphosphate + H(+). This Legionella pneumophila (strain Lens) protein is Phenylalanine--tRNA ligase alpha subunit.